The following is a 201-amino-acid chain: FMN-dependent NADH:quinone oxidoreductase (201 aa).

92–95 (MWNL) is an FMN binding site.

The protein belongs to the azoreductase type 1 family. In terms of assembly, homodimer. Requires FMN as cofactor.

The enzyme catalyses 2 a quinone + NADH + H(+) = 2 a 1,4-benzosemiquinone + NAD(+). It catalyses the reaction N,N-dimethyl-1,4-phenylenediamine + anthranilate + 2 NAD(+) = 2-(4-dimethylaminophenyl)diazenylbenzoate + 2 NADH + 2 H(+). Functionally, quinone reductase that provides resistance to thiol-specific stress caused by electrophilic quinones. In terms of biological role, also exhibits azoreductase activity. Catalyzes the reductive cleavage of the azo bond in aromatic azo compounds to the corresponding amines. In Caldicellulosiruptor bescii (strain ATCC BAA-1888 / DSM 6725 / KCTC 15123 / Z-1320) (Anaerocellum thermophilum), this protein is FMN-dependent NADH:quinone oxidoreductase.